The sequence spans 221 residues: Iron-sulfur cluster repair protein YtfE (221 aa).

The protein belongs to the RIC family. YtfE subfamily. In terms of assembly, homodimer.

It localises to the cytoplasm. Functionally, di-iron-containing protein involved in the repair of iron-sulfur clusters damaged by oxidative and nitrosative stress conditions. The protein is Iron-sulfur cluster repair protein YtfE of Yersinia pseudotuberculosis serotype O:1b (strain IP 31758).